A 203-amino-acid chain; its full sequence is Somatotropin (203 aa).

The N-terminal stretch at 1 to 17 (MDRVVLMLSVLSLGVSS) is a signal peptide. At Q18 the chain carries Pyrrolidone carboxylic acid. H36 is a binding site for Zn(2+). The cysteines at positions 68 and 176 are disulfide-linked. E185 contributes to the Zn(2+) binding site. Cysteines 193 and 201 form a disulfide.

This sequence belongs to the somatotropin/prolactin family.

It localises to the secreted. Functionally, growth hormone plays an important role in growth control and is involved in the regulation of several anabolic processes. Implicated as an osmoregulatory substance important for seawater adaptation. In Pagrus major (Red sea bream), this protein is Somatotropin (gh).